The sequence spans 1174 residues: RecBCD enzyme subunit RecB (1174 aa).

Residues 1–852 (MKIDSLKEKL…GGKTMNYEGL (852 aa)) form a DNA-binding and helicase activity, interacts with RecC region. One can recognise a UvrD-like helicase ATP-binding domain in the interval 4-449 (DSLKEKLNIF…YYLDTNWRSS (446 aa)). 25 to 32 (ASAGTGKT) contacts ATP. Residues 479-745 (PSSKNLKMNF…KIITIHKSKG (267 aa)) enclose the UvrD-like helicase C-terminal domain. A nuclease activity, interacts with RecD and RecA region spans residues 900-1174 (TWSITSFSQL…LIKKTMTLIS (275 aa)). Mg(2+)-binding residues include His957, Asp1068, and Asp1081. Asp1081 acts as the For nuclease activity in catalysis.

It belongs to the helicase family. UvrD subfamily. As to quaternary structure, heterotrimer of RecB, RecC and RecD. All subunits contribute to DNA-binding. Interacts with RecA. The cofactor is Mg(2+).

It catalyses the reaction Exonucleolytic cleavage (in the presence of ATP) in either 5'- to 3'- or 3'- to 5'-direction to yield 5'-phosphooligonucleotides.. It carries out the reaction Couples ATP hydrolysis with the unwinding of duplex DNA by translocating in the 3'-5' direction.. The enzyme catalyses ATP + H2O = ADP + phosphate + H(+). Functionally, a helicase/nuclease that prepares dsDNA breaks (DSB) for recombinational DNA repair. Binds to DSBs and unwinds DNA via a highly rapid and processive ATP-dependent bidirectional helicase activity. Unwinds dsDNA until it encounters a Chi (crossover hotspot instigator) sequence from the 3' direction. Cuts ssDNA a few nucleotides 3' to the Chi site. The properties and activities of the enzyme are changed at Chi. The Chi-altered holoenzyme produces a long 3'-ssDNA overhang and facilitates RecA-binding to the ssDNA for homologous DNA recombination and repair. Holoenzyme degrades any linearized DNA that is unable to undergo homologous recombination. In the holoenzyme this subunit contributes ATPase, 3'-5' helicase, exonuclease activity and loads RecA onto ssDNA. The sequence is that of RecBCD enzyme subunit RecB from Buchnera aphidicola subsp. Acyrthosiphon pisum (strain APS) (Acyrthosiphon pisum symbiotic bacterium).